A 100-amino-acid polypeptide reads, in one-letter code: Glyceraldehyde-3-phosphate dehydrogenase, testis-specific (100 aa).

2 residues coordinate NAD(+): Asp-39 and Thr-64. Arg-89 provides a ligand contact to D-glyceraldehyde 3-phosphate.

Belongs to the glyceraldehyde-3-phosphate dehydrogenase family. In terms of assembly, homotetramer.

The protein localises to the cytoplasm. The enzyme catalyses D-glyceraldehyde 3-phosphate + phosphate + NAD(+) = (2R)-3-phospho-glyceroyl phosphate + NADH + H(+). It functions in the pathway carbohydrate degradation; glycolysis; pyruvate from D-glyceraldehyde 3-phosphate: step 1/5. Its function is as follows. May play an important role in regulating the switch between different pathways for energy production during spermiogenesis and in the spermatozoon. Required for sperm motility and male fertility. The polypeptide is Glyceraldehyde-3-phosphate dehydrogenase, testis-specific (Mesocricetus auratus (Golden hamster)).